Here is a 207-residue protein sequence, read N- to C-terminus: Strobilurin A biosynthesis cluster protein r1 (207 aa).

2 helical membrane-spanning segments follow: residues 108–128 (FIFP…LLYL) and 169–189 (NLTT…PFWI).

It is found in the membrane. It functions in the pathway mycotoxin biosynthesis. Part of the gene cluster that mediates the biosynthesis of strobilurin A, an antifungal polyketide that contains a key beta-methoxyacrylate toxophore that targets the complex III of the mitochondrial electron transport chain. Strobilurin biosynthesis begins with construction of benzoyl CoA by step-wise elimination of ammonia from phenylalanine by the phenylalanine ammonia-lyase str11, oxygenation by str8 and retro-Claisen reaction to form benzoic acid, which is activated to its CoA thiolester benzoyl CoA by the dedicated CoA ligase str10. Benzoyl CoA forms the starter unit for the highly reducing polyketide synthase stpks1 that produces the polyketide prestrobilutin A. The FAD-dependent oxygenase str9 then catalyzes the key oxidative rearrangement responsible for the creation of the beta-methoxyacrylate toxophore. Str9 performs epoxidation of the 2,3 olefin of prestrobilutin A, followed by Meinwald rearrangement to furnish the aldehyde intermediate. Rapid enolization of the aldehyde intermediate would give the beta-methoxyacrylate skeleton and methylations catalyzed by str2 and str3 complete the synthesis and lead to the production of strobilurin A. The short-chain dehydrogenase stl2 and the dehydrogenase str4 play a role in the shunt pathway leading to the production of bolineol. The cluster encodes no obvious halogenase gene that could be involved in production of strobilurin B, nor any obvious dimethylallyl-transferase that could be involved in the production of strobilurin G. It is possible that unknown proteins encoded in, or near, the cluster (such as str1 or stl1) may form new classes of halogenases or dimethylally-transferases, or that the responsible genes are located elsewhere on the genome. Similarly, proteins encoded by str5/str6 hydrolases appear to have no chemical role in the biosynthesis of strobilurin A. Finally, no obvious self-resistance gene is found within the cluster. The chain is Strobilurin A biosynthesis cluster protein r1 from Strobilurus tenacellus.